A 311-amino-acid polypeptide reads, in one-letter code: Probable manganese-dependent inorganic pyrophosphatase (311 aa).

Mn(2+)-binding residues include His-9, Asp-13, Asp-15, Asp-75, His-97, and Asp-149.

It belongs to the PPase class C family. It depends on Mn(2+) as a cofactor.

The protein resides in the cytoplasm. The catalysed reaction is diphosphate + H2O = 2 phosphate + H(+). The chain is Probable manganese-dependent inorganic pyrophosphatase from Shouchella clausii (strain KSM-K16) (Alkalihalobacillus clausii).